Here is a 419-residue protein sequence, read N- to C-terminus: DNA ligase (419 aa).

Residues 1–120 (MLNHFPGHCS…ARQKRGAHTN (120 aa)) are NTD. Residues 121 to 317 (TGMIPPMLVK…NYHSAHLAKL (197 aa)) are AD domain. Catalysis depends on Lys151, which acts as the N6-AMP-lysine intermediate. The interval 318–419 (KPLLDAEFIL…REPINVLEII (102 aa)) is OB domain.

Belongs to the ATP-dependent DNA ligase family.

It localises to the virion. It carries out the reaction ATP + (deoxyribonucleotide)n-3'-hydroxyl + 5'-phospho-(deoxyribonucleotide)m = (deoxyribonucleotide)n+m + AMP + diphosphate.. Functionally, very low-fidelity DNA ligase that seals nicks in double-stranded DNA during DNA repair. Together with the viral repair DNA polymerase X, fills the single nucleotide gaps generated by the AP endonuclease. It is not essential for viral replication and recombination. Displays a very low adenylation activity towards DNA with 3'-dideoxy- or 3'-amino-terminated nicks compared to regular nick DNA. The chain is DNA ligase from Ornithodoros (relapsing fever ticks).